Reading from the N-terminus, the 248-residue chain is 3-deoxy-manno-octulosonate cytidylyltransferase (248 aa).

The protein belongs to the KdsB family.

The protein resides in the cytoplasm. It catalyses the reaction 3-deoxy-alpha-D-manno-oct-2-ulosonate + CTP = CMP-3-deoxy-beta-D-manno-octulosonate + diphosphate. Its pathway is nucleotide-sugar biosynthesis; CMP-3-deoxy-D-manno-octulosonate biosynthesis; CMP-3-deoxy-D-manno-octulosonate from 3-deoxy-D-manno-octulosonate and CTP: step 1/1. It functions in the pathway bacterial outer membrane biogenesis; lipopolysaccharide biosynthesis. Functionally, activates KDO (a required 8-carbon sugar) for incorporation into bacterial lipopolysaccharide in Gram-negative bacteria. The sequence is that of 3-deoxy-manno-octulosonate cytidylyltransferase from Syntrophus aciditrophicus (strain SB).